We begin with the raw amino-acid sequence, 466 residues long: A-type ATP synthase subunit B (466 aa).

It belongs to the ATPase alpha/beta chains family. Has multiple subunits with at least A(3), B(3), C, D, E, F, H, I and proteolipid K(x).

The protein localises to the cell membrane. In terms of biological role, component of the A-type ATP synthase that produces ATP from ADP in the presence of a proton gradient across the membrane. The B chain is a regulatory subunit. This Sulfolobus acidocaldarius (strain ATCC 33909 / DSM 639 / JCM 8929 / NBRC 15157 / NCIMB 11770) protein is A-type ATP synthase subunit B.